The chain runs to 1013 residues: Alpha-2-macroglobulin homolog (1013 aa).

The interval 804–844 (AQRGANGERDGLRETVPVRPAGARQLLSGSGSVGADKAGGN) is disordered.

Belongs to the protease inhibitor I39 (alpha-2-macroglobulin) family. Bacterial alpha-2-macroglobulin subfamily.

The protein is Alpha-2-macroglobulin homolog of Deinococcus radiodurans (strain ATCC 13939 / DSM 20539 / JCM 16871 / CCUG 27074 / LMG 4051 / NBRC 15346 / NCIMB 9279 / VKM B-1422 / R1).